Here is a 487-residue protein sequence, read N- to C-terminus: Steroid 21-hydroxylase (487 aa).

Heme b is bound by residues Arg92 and Lys117. 17alpha-hydroxyprogesterone is bound at residue Arg228. Arg228 is a progesterone binding site. Heme b-binding residues include His357, Arg418, and Cys420.

It belongs to the cytochrome P450 family. It depends on heme b as a cofactor.

It is found in the endoplasmic reticulum membrane. It localises to the microsome membrane. It catalyses the reaction progesterone + reduced [NADPH--hemoprotein reductase] + O2 = 21-hydroxyprogesterone + oxidized [NADPH--hemoprotein reductase] + H2O + H(+). The catalysed reaction is 17alpha-hydroxyprogesterone + reduced [NADPH--hemoprotein reductase] + O2 = 11-deoxycortisol + oxidized [NADPH--hemoprotein reductase] + H2O + H(+). Functionally, a cytochrome P450 monooxygenase that plays a major role in adrenal steroidogenesis. Catalyzes the hydroxylation at C-21 of progesterone and 17alpha-hydroxyprogesterone to respectively form 11-deoxycorticosterone and 11-deoxycortisol, intermediate metabolites in the biosynthetic pathway of mineralocorticoids and glucocorticoids. Mechanistically, uses molecular oxygen inserting one oxygen atom into a substrate, and reducing the second into a water molecule, with two electrons provided by NADPH via cytochrome P450 reductase (CPR; NADPH-ferrihemoprotein reductase). In Mus musculus (Mouse), this protein is Steroid 21-hydroxylase (Cyp21).